Here is a 118-residue protein sequence, read N- to C-terminus: MGIKYSNKINKIRTFALSLVFIGLFIAYLGVFFRENIIIMTTFMMVGFLAVIASTVVYFWIGMLSTKTIQIICPSCDKPTKMLGRVDACMHCNQPLTLDRNLEGKEFDEKYNKKSYKS.

Helical transmembrane passes span 12 to 32 and 43 to 63; these read IRTFALSLVFIGLFIAYLGVF and FMMVGFLAVIASTVVYFWIGM.

The protein belongs to the UPF0295 family.

The protein resides in the cell membrane. This is UPF0295 protein BcerKBAB4_0454 from Bacillus mycoides (strain KBAB4) (Bacillus weihenstephanensis).